The primary structure comprises 88 residues: EMBRYO SURROUNDING FACTOR 1-like protein 3 (88 aa).

The N-terminal stretch at M1–C22 is a signal peptide. Disulfide bonds link C41–C56, C54–C80, and C57–C67.

Belongs to the MEG family. As to expression, expressed in stems, leaves and flowers.

This Arabidopsis thaliana (Mouse-ear cress) protein is EMBRYO SURROUNDING FACTOR 1-like protein 3 (ESFL3).